Reading from the N-terminus, the 153-residue chain is Aspartate carbamoyltransferase regulatory chain (153 aa).

Residues Cys109, Cys114, Cys138, and Cys141 each coordinate Zn(2+).

It belongs to the PyrI family. Contains catalytic and regulatory chains. Zn(2+) serves as cofactor.

Its function is as follows. Involved in allosteric regulation of aspartate carbamoyltransferase. The chain is Aspartate carbamoyltransferase regulatory chain from Salmonella paratyphi A (strain ATCC 9150 / SARB42).